The primary structure comprises 759 residues: ARF GTPase-activating protein GIT2 (759 aa).

The Arf-GAP domain maps to 1–124 (MSKRLRSSEV…AFVHRLPCRD (124 aa)). The segment at 11 to 34 (CADCSGPDPSWASVNRGTFLCDEC) adopts a C4-type zinc-finger fold. ANK repeat units follow at residues 132-161 (DLSK…QANF), 166-195 (KGNT…DPGT), and 199-228 (SGKT…ELTD). The tract at residues 379-422 (QHSVESQDNDQPDYDSVASDEDTDLETTASKTNRQKSLDSDLSD) is disordered. The segment covering 385–403 (QDNDQPDYDSVASDEDTDL) has biased composition (acidic residues). Residues serine 394 and serine 397 each carry the phosphoserine modification. The residue at position 401 (threonine 401) is a Phosphothreonine. 3 positions are modified to phosphoserine: serine 415, serine 418, and serine 421. Residues 437–478 (LVASEAKIQQLMKVNNNLSDELRIMQKKLQTLQSENSNLRKQ) are a coiled coil. Polar residues predominate over residues 480-499 (TTNVYQVQTGSEYTDTSNHS). 2 disordered regions span residues 480–538 (TTNV…EESR) and 554–643 (VTSS…TEDV). At tyrosine 484 the chain carries Phosphotyrosine. Residues 555 to 569 (TSSSSLPSFPSTLSW) are compositionally biased toward low complexity. Phosphoserine is present on residues serine 559, serine 562, and serine 570. Basic and acidic residues predominate over residues 570–583 (SRDESARRASRLEK). Positions 584–597 (QNSTPESDYDNTPN) are enriched in polar residues. Threonine 587 carries the post-translational modification Phosphothreonine. Serine 614 bears the Phosphoserine mark.

In terms of assembly, may form heterooligomers with GIT1. Directly interacts with protein Piccolo/PCLO. Interacts with PPFIA1 and PPFIA2. Interacts with ARHGEF7. Identified in a complex with ARHGEF6 and BIN2. Interacts with PAK3. Interacts with PXN/paxillin. Interacts with TGFB1I1. Forms a complex with EFNB1 and GRB4/NCK2.

GTPase-activating protein for ADP ribosylation factor family members, including ARF1. The polypeptide is ARF GTPase-activating protein GIT2 (GIT2) (Homo sapiens (Human)).